The primary structure comprises 384 residues: Lipid-A-disaccharide synthase (384 aa).

This sequence belongs to the LpxB family.

The catalysed reaction is a lipid X + a UDP-2-N,3-O-bis[(3R)-3-hydroxyacyl]-alpha-D-glucosamine = a lipid A disaccharide + UDP + H(+). It participates in bacterial outer membrane biogenesis; LPS lipid A biosynthesis. Functionally, condensation of UDP-2,3-diacylglucosamine and 2,3-diacylglucosamine-1-phosphate to form lipid A disaccharide, a precursor of lipid A, a phosphorylated glycolipid that anchors the lipopolysaccharide to the outer membrane of the cell. In Geobacter metallireducens (strain ATCC 53774 / DSM 7210 / GS-15), this protein is Lipid-A-disaccharide synthase.